The primary structure comprises 199 residues: Protein p2 (199 aa).

The protein resides in the host cytoplasm. In Avena sativa (Oat), this protein is Protein p2.